Consider the following 381-residue polypeptide: Dual specificity protein phosphatase 6 (381 aa).

The Rhodanese domain maps to 30–148 (GNEQLLLMDC…FQAEFALHCE (119 aa)). The segment at 176–203 (SSSDIESDLDRDPNSATDSDGSPLSNSQ) is disordered. Positions 189–203 (NSATDSDGSPLSNSQ) are enriched in polar residues. Residues 206–349 (FPVEILPFLY…LLDFERTLGL (144 aa)) enclose the Tyrosine-protein phosphatase domain. Residue Cys-293 is the Phosphocysteine intermediate of the active site.

The protein belongs to the protein-tyrosine phosphatase family. Non-receptor class dual specificity subfamily. In terms of assembly, interacts with MAPK1/ERK2. In terms of processing, ubiquitinated by the SCF(FBXO31) complex, leading to its proteasomal degradation. In terms of tissue distribution, expressed in lung, heart, brain, and kidney, but not significantly in skeletal muscle or testis.

The protein resides in the cytoplasm. The enzyme catalyses O-phospho-L-tyrosyl-[protein] + H2O = L-tyrosyl-[protein] + phosphate. The catalysed reaction is O-phospho-L-seryl-[protein] + H2O = L-seryl-[protein] + phosphate. It carries out the reaction O-phospho-L-threonyl-[protein] + H2O = L-threonyl-[protein] + phosphate. Its function is as follows. Dual specificity protein phosphatase, which mediates dephosphorylation and inactivation of MAP kinases. Has a specificity for the ERK family. Implicated in muscle and neuronal differentiation. Plays an important role in alleviating chronic postoperative pain. Necessary for the normal dephosphorylation of the long-lasting phosphorylated forms of spinal MAPK1/3 and MAP kinase p38 induced by peripheral surgery, which drives the resolution of acute postoperative allodynia. Also important for dephosphorylation of MAPK1/3 in local wound tissue, which further contributes to resolution of acute pain. The protein is Dual specificity protein phosphatase 6 (Dusp6) of Rattus norvegicus (Rat).